Reading from the N-terminus, the 313-residue chain is Fe-S cluster assembly protein DRE2 (313 aa).

Positions 1-184 (MTLRILLLLH…KKLLDRSNEV (184 aa)) are N-terminal SAM-like domain. The span at 134-144 (NITSNSNNNDS) shows a compositional bias: low complexity. Disordered regions lie at residues 134-155 (NITSNSNNNDSSPREVGVNNTG), 187-254 (NLAS…QEDN), and 271-313 (NLII…RQSG). Positions 185-270 (KGNLASGTVK…NDLISELKSD (86 aa)) are linker. Residues 189-207 (ASGTVKSPSPGLTDTSAQN) show a composition bias toward polar residues. Positions 233 to 254 (SDSDNNEGRDLDDDDDDGQEDN) are enriched in acidic residues.

This sequence belongs to the anamorsin family. In terms of assembly, monomer. Interacts with TAH18. Interacts with MIA40.

Its subcellular location is the cytoplasm. The protein resides in the mitochondrion intermembrane space. Its function is as follows. Component of the cytosolic iron-sulfur (Fe-S) protein assembly (CIA) machinery required for the maturation of extramitochondrial Fe-S proteins. Part of an electron transfer chain functioning in an early step of cytosolic Fe-S biogenesis, facilitating the de novo assembly of a [4Fe-4S] cluster on the scaffold complex CFD1-NBP35. Electrons are transferred to DRE2 from NADPH via the FAD- and FMN-containing protein TAH18. TAH18-DRE2 are also required for the assembly of the diferric tyrosyl radical cofactor of ribonucleotide reductase (RNR), probably by providing electrons for reduction during radical cofactor maturation in the catalytic small subunit RNR2. This chain is Fe-S cluster assembly protein DRE2 (DRE2), found in Lodderomyces elongisporus (strain ATCC 11503 / CBS 2605 / JCM 1781 / NBRC 1676 / NRRL YB-4239) (Yeast).